We begin with the raw amino-acid sequence, 500 residues long: MKKYIVALDQGTTSSRAIIFDKEQNIIGVSQKEFNQIYPREGWVEHDPMEIWATQYSVLQEVMAKCNITQENIAAIGITNQRETTIVWDKNTGVPIYNAIVWQCRRTADICDDLKERDGLVDYIRENTGLVLDAYFSGTKIKWILDNVEGAREKAEKGELLFGTVDSWLVWKLTNGKVHVTDYTNASRTMIFNIKNLEWDERMLKELDIPRSMLPEVKNSSEIYGYANLGAKGGIRVPIAGIAGDQQAALFGQAAFNKGDVKNTYGTGCFLLMNTGEELVKSKSGLLTTIAIGLHGKVQYALEGSVFVGGAVIQWLRDELRIISDSSDTEYFATKVEDNGGVYVVPAFVGLGAPYWDMYARGTIVGLTRGTNRNHIIRASLESIAYQTRDVLEAMINDVGYDINCIKVDGGASRNNFLMQFQSDLVGKKVIKPIITETTALGAAYLAGLAVGYWSDKEEIAKLWFASEEFEPNISEERRNKYYKKWKKAIERSKEWAIED.

Thr-12 is a binding site for ADP. Residues Thr-12, Thr-13, and Ser-14 each contribute to the ATP site. Thr-12 contributes to the sn-glycerol 3-phosphate binding site. Arg-16 provides a ligand contact to ADP. Positions 82, 83, 135, and 245 each coordinate sn-glycerol 3-phosphate. Residues Arg-82, Glu-83, Tyr-135, Asp-245, and Gln-246 each contribute to the glycerol site. ADP-binding residues include Thr-267 and Gly-310. Residues Thr-267, Gly-310, Gln-314, and Gly-411 each contribute to the ATP site. Positions 411 and 415 each coordinate ADP.

Belongs to the FGGY kinase family. In terms of assembly, homotetramer and homodimer (in equilibrium).

The catalysed reaction is glycerol + ATP = sn-glycerol 3-phosphate + ADP + H(+). Its pathway is polyol metabolism; glycerol degradation via glycerol kinase pathway; sn-glycerol 3-phosphate from glycerol: step 1/1. Activated by phosphorylation and inhibited by fructose 1,6-bisphosphate (FBP). In terms of biological role, key enzyme in the regulation of glycerol uptake and metabolism. Catalyzes the phosphorylation of glycerol to yield sn-glycerol 3-phosphate. The protein is Glycerol kinase of Clostridium perfringens (strain SM101 / Type A).